We begin with the raw amino-acid sequence, 334 residues long: Holliday junction branch migration complex subunit RuvB (334 aa).

The interval 4 to 186 is large ATPase domain (RuvB-L); that stretch reads ADRLIAPISN…FGIVQRLEYY (183 aa). ATP contacts are provided by residues I25, R26, G67, K70, T71, T72, 133–135, R176, Y186, and R223; that span reads EDY. Residue T71 participates in Mg(2+) binding. The tract at residues 187–257 is small ATPAse domain (RuvB-S); that stretch reads KVADLQHIVQ…TADRALNMLD (71 aa). The tract at residues 260–334 is head domain (RuvB-H); that stretch reads HQGFDYMDRK…RAYLHFGIEK (75 aa). Residues R315 and R320 each coordinate DNA.

The protein belongs to the RuvB family. In terms of assembly, homohexamer. Forms an RuvA(8)-RuvB(12)-Holliday junction (HJ) complex. HJ DNA is sandwiched between 2 RuvA tetramers; dsDNA enters through RuvA and exits via RuvB. An RuvB hexamer assembles on each DNA strand where it exits the tetramer. Each RuvB hexamer is contacted by two RuvA subunits (via domain III) on 2 adjacent RuvB subunits; this complex drives branch migration. In the full resolvosome a probable DNA-RuvA(4)-RuvB(12)-RuvC(2) complex forms which resolves the HJ.

It is found in the cytoplasm. It catalyses the reaction ATP + H2O = ADP + phosphate + H(+). Its function is as follows. The RuvA-RuvB-RuvC complex processes Holliday junction (HJ) DNA during genetic recombination and DNA repair, while the RuvA-RuvB complex plays an important role in the rescue of blocked DNA replication forks via replication fork reversal (RFR). RuvA specifically binds to HJ cruciform DNA, conferring on it an open structure. The RuvB hexamer acts as an ATP-dependent pump, pulling dsDNA into and through the RuvAB complex. RuvB forms 2 homohexamers on either side of HJ DNA bound by 1 or 2 RuvA tetramers; 4 subunits per hexamer contact DNA at a time. Coordinated motions by a converter formed by DNA-disengaged RuvB subunits stimulates ATP hydrolysis and nucleotide exchange. Immobilization of the converter enables RuvB to convert the ATP-contained energy into a lever motion, pulling 2 nucleotides of DNA out of the RuvA tetramer per ATP hydrolyzed, thus driving DNA branch migration. The RuvB motors rotate together with the DNA substrate, which together with the progressing nucleotide cycle form the mechanistic basis for DNA recombination by continuous HJ branch migration. Branch migration allows RuvC to scan DNA until it finds its consensus sequence, where it cleaves and resolves cruciform DNA. The chain is Holliday junction branch migration complex subunit RuvB from Vibrio cholerae serotype O1 (strain ATCC 39541 / Classical Ogawa 395 / O395).